The following is a 184-amino-acid chain: Peptide deformylase 2 (184 aa).

The Fe cation site is built by Cys110 and His153. Glu154 is a catalytic residue. His157 serves as a coordination point for Fe cation.

The protein belongs to the polypeptide deformylase family. It depends on Fe(2+) as a cofactor.

The catalysed reaction is N-terminal N-formyl-L-methionyl-[peptide] + H2O = N-terminal L-methionyl-[peptide] + formate. Removes the formyl group from the N-terminal Met of newly synthesized proteins. Requires at least a dipeptide for an efficient rate of reaction. N-terminal L-methionine is a prerequisite for activity but the enzyme has broad specificity at other positions. The polypeptide is Peptide deformylase 2 (defB) (Bacillus subtilis (strain 168)).